Here is a 932-residue protein sequence, read N- to C-terminus: uncharacterized protein (932 aa).

5 disordered regions span residues 26 to 120 (NINN…NMLT), 158 to 289 (MGIG…EEKK), 304 to 617 (NNNN…INHD), 635 to 720 (QQSQ…PPLV), and 802 to 863 (SVSS…FPLE). Composition is skewed to low complexity over residues 41–105 (NNNI…IISS) and 163–241 (NNNN…YGNN). Polar residues predominate over residues 242–253 (TPVNYIHNNSTP). A compositionally biased stretch (acidic residues) spans 265–285 (SDEEDSVLYSSDDSEESDYEE). Over residues 304–475 (NNNNINNNNM…NNNNNNNNNN (172 aa)) the composition is skewed to low complexity. 2 stretches are compositionally biased toward polar residues: residues 476–492 (ENYVGSSLSNSADNTES) and 527–540 (DIPNSYPISPTKQQ). Positions 548 to 590 (SPVYSPPNNLSPLSSPYLHHNSNNNSNNGGGNSNNNNTNFNYG) are enriched in low complexity. The span at 606-617 (GERDPPHVINHD) shows a compositional bias: basic and acidic residues. Low complexity-rich tracts occupy residues 635–666 (QQSQHQHQQQQQQPQSQQQPFYSPYQSPPSSS), 696–707 (SPPNTSISSLSS), and 813–853 (NSSN…NNNS). Basic and acidic residues predominate over residues 854-863 (EPKKPKFPLE).

This is an uncharacterized protein from Dictyostelium discoideum (Social amoeba).